The chain runs to 169 residues: Disulfide bond formation protein B (169 aa).

The Cytoplasmic segment spans residues 1–14 (MSNDTFYLKREKRF). Residues 15–31 (LVLLGIICLSLIGGALY) traverse the membrane as a helical segment. The Periplasmic segment spans residues 32–49 (MQIALGEAPCPLCILQRY). A disulfide bridge connects residues cysteine 41 and cysteine 44. The chain crosses the membrane as a helical span at residues 50 to 64 (ALLFIAIFAFIGAAM). Residues 65–71 (NGRRGVT) lie on the Cytoplasmic side of the membrane. Residues 72–89 (VFEALVTLSALCGIAAAG) form a helical membrane-spanning segment. At 90–144 (RHAWILAHPSDSCGIDILQPIVDGLPLATLFPTGFQVSGFCTTPYPPVLGLSLAQ) the chain is on the periplasmic side. Cysteines 102 and 130 form a disulfide. A helical transmembrane segment spans residues 145–163 (WALTAFVLTAILVPACIIR). Over 164-169 (NRRKPY) the chain is Cytoplasmic.

Belongs to the DsbB family.

The protein resides in the cell inner membrane. Its function is as follows. Required for disulfide bond formation in some periplasmic proteins. Acts by oxidizing the DsbA protein. The sequence is that of Disulfide bond formation protein B from Pseudomonas syringae pv. tomato (strain ATCC BAA-871 / DC3000).